The chain runs to 336 residues: D-alanine--D-alanine ligase (336 aa).

An ATP-grasp domain is found at 124–330; the sequence is KMWFSALGIP…FTEYLSLVIN (207 aa). ATP is bound at residue 154-209; it reads ALENWGSIFVKAASQGSSVGCYKVDDSSKVAGVLKDAFGYAPYVIVEKTIKARELE. Residues aspartate 284, glutamate 297, and asparagine 299 each contribute to the Mg(2+) site.

The protein belongs to the D-alanine--D-alanine ligase family. Requires Mg(2+) as cofactor. Mn(2+) is required as a cofactor.

The protein localises to the cytoplasm. It catalyses the reaction 2 D-alanine + ATP = D-alanyl-D-alanine + ADP + phosphate + H(+). The protein operates within cell wall biogenesis; peptidoglycan biosynthesis. Cell wall formation. The protein is D-alanine--D-alanine ligase of Shewanella sp. (strain MR-4).